The following is a 503-amino-acid chain: Glucosaminyl-phosphatidylinositol-acyltransferase PIGW (503 aa).

At 1-21 the chain is on the lumenal side; sequence MSQKQLKEAFVRNLSGTSVLE. Residue asparagine 13 is glycosylated (N-linked (GlcNAc...) asparagine). A helical transmembrane segment spans residues 22–42; the sequence is VTQGLCFPAFCILCRGLWIIF. Over 43-48 the chain is Cytoplasmic; sequence SQHVCS. A helical membrane pass occupies residues 49 to 71; it reads FSNTWSTRFLMDFVVLIVPLVIT. At 72 to 74 the chain is on the lumenal side; sequence LTV. Residues 75–97 traverse the membrane as a helical segment; the sequence is LSSFILLENLTVIVWGAWLLYQI. At 98 to 131 the chain is on the cytoplasmic side; that stretch reads YHRRTCYAKVPVQKVFANFLKISLESEYNPAITC. The helical transmembrane segment at 132–152 threads the bilayer; that stretch reads YRVINSVFTAIAILAVDFPLF. The Lumenal segment spans residues 153 to 160; it reads PRRFAKTE. A helical membrane pass occupies residues 161–181; it reads LYGTGAMDFGVGGFIFGAAMV. Residues 182-201 lie on the Cytoplasmic side of the membrane; that stretch reads CPEVRRKSIEESRFNYLRKS. A helical transmembrane segment spans residues 202 to 222; the sequence is LYSVWPLVFLGMGRLVIIKSI. Over 223 to 236 the chain is Lumenal; that stretch reads GYQEHSTEYGIHWN. The helical transmembrane segment at 237–257 threads the bilayer; that stretch reads FFFTIIVVRLVTSLLLIIFPL. Residues 258–259 are Cytoplasmic-facing; the sequence is NK. The chain crosses the membrane as a helical span at residues 260 to 280; sequence SWIVAVSITVVYQLALDYTPL. The Lumenal segment spans residues 281–304; sequence KRILLYGTDGSGTRVGFLNANREG. The chain crosses the membrane as a helical span at residues 305 to 325; sequence IISTLGYVTIHMAGVQTGLYV. Residues 326-339 lie on the Cytoplasmic side of the membrane; it reads LKGRAQVRDWIKAT. Residues 340-360 form a helical membrane-spanning segment; that stretch reads CWVFSVAVGFFISLHIVQVNI. Over 361 to 380 the chain is Lumenal; it reads EAVSRRMANLAFCLWVVASS. A helical transmembrane segment spans residues 381–401; it reads LMLLSCLLLSGIILSFAQFLI. The Cytoplasmic portion of the chain corresponds to 402–447; sequence KGSLVPCSWKLIQSPTTHKNHSESLILEAEKNQPSLCLITALNRNQ. Serine 415 carries the phosphoserine modification. Residues 448–468 traverse the membrane as a helical segment; sequence LFFFLLSNITTGLINLTMDTL. At 469-472 the chain is on the lumenal side; that stretch reads HTGA. Residues 473–493 traverse the membrane as a helical segment; it reads LWTLVVLSIYMFTNCLVIYVL. Residues 494–503 are Cytoplasmic-facing; the sequence is DLQGKTIKFW.

It belongs to the PIGW family.

It localises to the endoplasmic reticulum membrane. The protein operates within glycolipid biosynthesis; glycosylphosphatidylinositol-anchor biosynthesis. Acyltransferase that catalyzes the acyl transfer from an acyl-CoA at the 2-OH position of the inositol ring of glucosaminyl phosphatidylinositol (GlcN-PI) to generate GlcN-(acyl)PI and participates in the fourth step of GPI-anchor biosynthesi. Required for the transport of GPI-anchored proteins to the plasma membrane. Acetylation during GPI-anchor biosynthesis is not essential for the subsequent mannosylation and is usually removed soon after the attachment of GPIs to proteins. The protein is Glucosaminyl-phosphatidylinositol-acyltransferase PIGW of Mus musculus (Mouse).